We begin with the raw amino-acid sequence, 3526 residues long: WD repeat and FYVE domain-containing protein 3 (3526 aa).

Ser1942 and Ser2278 each carry phosphoserine. A sufficient for localization to p62 bodies/ALIS region spans residues 2285-2981; the sequence is LTGSRRNRKE…PHPPKRVRSR (697 aa). Disordered stretches follow at residues 2403–2429 and 2459–2522; these read ETNVASEIPSKQPETPDDIPQKKPARY and SSEG…EKTD. A compositionally biased stretch (basic and acidic residues) spans 2468 to 2477; the sequence is EPEHGEDTIA. Phosphoserine is present on Ser2492. The BEACH-type PH domain maps to 2531–2656; sequence EEGEKIQHMY…IRNKVYQRFL (126 aa). The segment at 2586 to 3526 is interaction with SQSTM1; that stretch reads MHEPIIPRGA…RGSEDGPRNC (941 aa). Positions 2683–2976 constitute a BEACH domain; it reads GLLSTLVGEK…QLFKKPHPPK (294 aa). An interaction with ATG5 region spans residues 2981–3526; the sequence is RLNGDNAGIS…RGSEDGPRNC (546 aa). 4 WD repeats span residues 3077–3115, 3125–3164, 3167–3206, and 3210–3254; these read SEWGQILCAICPNPKLVITGGTSTVVCVWEMGTSKEKAK, GHTDTVTCATASLAYHIIVSGSRDRTCIIWDLNKLSFLTQ, GHRAPVSALCINELTGDIVSCAGTYIHVWSINGNPIVSVN, and GRSQ…VPET. Residues 3272 to 3335 form a disordered region; the sequence is AQIGQEAQDE…SGSDDSRRWS (64 aa). Over residues 3278-3290 the composition is skewed to acidic residues; sequence AQDEDSSDSEADE. The tract at residues 3313 to 3363 is interaction with GABARAP; that stretch reads AASCRATAAWCTDSGSDDSRRWSDQLSLDEKDGFIFVNYSEGQTRAHLQGP. 2 positions are modified to phosphoserine: Ser3335 and Ser3339. Residues 3346 to 3349 carry the LC3-interacting region (LIR) motif; the sequence is FIFV. The WD 5 repeat unit spans residues 3408–3447; the sequence is AHPAEVTALGISKDHSRILVGDSRGRVFSWSVSDQPGRSA. Residues 3454 to 3514 form an FYVE-type zinc finger; that stretch reads DEGGDSCSGC…VCQNCYYNLQ (61 aa). 8 residues coordinate Zn(2+): Cys3460, Cys3463, Cys3476, Cys3479, Cys3484, Cys3487, Cys3506, and Cys3509.

As to quaternary structure, directly interacts with ATG5 and associates with the ATG12-ATG5-ATG16L complex. Interacts with p62/SQSTM1; this interaction is required to recruit WDFY3 to cytoplasmic bodies and to PML bodies. Directly interacts with GABARAP, GABARAPL1 and GABARAPL2; the interaction with GABARAP is required for WDFY3 recruitment to MAP1LC3B-positive p62/SQSTM1 bodies. Weakly interacts with MAP1LC3C; this interaction is direct. Does not interact with MAP1LC3A, nor MAP1LC3B. Interacts with TRAF6. As to expression, expressed in osteoclast and their mononuclear precursors (at protein level).

The protein localises to the nucleus membrane. It is found in the cytoplasm. The protein resides in the cytosol. Its subcellular location is the nucleus. It localises to the PML body. The protein localises to the membrane. It is found in the perikaryon. The protein resides in the cell projection. Its subcellular location is the axon. Its function is as follows. Required for selective macroautophagy (aggrephagy). Acts as an adapter protein by linking specific proteins destined for degradation to the core autophagic machinery members, such as the ATG5-ATG12-ATG16L E3-like ligase, SQSTM1 and LC3. Along with p62/SQSTM1, involved in the formation and autophagic degradation of cytoplasmic ubiquitin-containing inclusions (p62 bodies, ALIS/aggresome-like induced structures). Along with SQSTM1, required to recruit ubiquitinated proteins to PML bodies in the nucleus. Important for normal brain development. Essential for the formation of axonal tracts throughout the brain and spinal cord, including the formation of the major forebrain commissures. Involved in the ability of neural cells to respond to guidance cues. Required for cortical neurons to respond to the trophic effects of netrin-1/NTN1. Regulates Wnt signaling through the removal of DVL3 aggregates, likely in an autophagy-dependent manner. This process may be important for the determination of brain size during embryonic development. May regulate osteoclastogenesis by acting on the TNFSF11/RANKL - TRAF6 pathway. After cytokinetic abscission, involved in midbody remnant degradation. In vitro strongly binds to phosphatidylinositol 3-phosphate (PtdIns3P). In Homo sapiens (Human), this protein is WD repeat and FYVE domain-containing protein 3 (WDFY3).